We begin with the raw amino-acid sequence, 372 residues long: Mitogen-activated protein kinase spk1 (372 aa).

Residues 1 to 25 are compositionally biased toward polar residues; the sequence is MASATSTPTIADGNSNKESVATSRS. The disordered stretch occupies residues 1–29; that stretch reads MASATSTPTIADGNSNKESVATSRSPHTH. One can recognise a Protein kinase domain in the interval 39-327; the sequence is YEMINLIGQG…AEEALKHPYV (289 aa). Residues 45-53 and Lys-68 contribute to the ATP site; that span reads IGQGAYGVV. Residue Asp-163 is the Proton acceptor of the active site. Position 199 is a phosphothreonine (Thr-199). The short motif at 199–201 is the TXY element; sequence TEY. Tyr-201 is subject to Phosphotyrosine.

Belongs to the protein kinase superfamily. CMGC Ser/Thr protein kinase family. MAP kinase subfamily. Mg(2+) serves as cofactor. In terms of processing, dually phosphorylated on Thr-199 and Tyr-201, which activates the enzyme.

Its subcellular location is the nucleus. The catalysed reaction is L-seryl-[protein] + ATP = O-phospho-L-seryl-[protein] + ADP + H(+). It catalyses the reaction L-threonyl-[protein] + ATP = O-phospho-L-threonyl-[protein] + ADP + H(+). Its activity is regulated as follows. Activated by tyrosine and threonine phosphorylation. In terms of biological role, involved in mating signal transduction pathway. The chain is Mitogen-activated protein kinase spk1 (spk1) from Schizosaccharomyces pombe (strain 972 / ATCC 24843) (Fission yeast).